Reading from the N-terminus, the 447-residue chain is Tubulin beta-5 chain (447 aa).

GTP-binding residues include Q11, E69, S138, G142, T143, G144, N204, and N226. E69 is a Mg(2+) binding site. The segment at 421-447 is disordered; the sequence is EYQQYQDATADDEEEDYGDEEEDEVAA. The segment covering 429 to 447 has biased composition (acidic residues); sequence TADDEEEDYGDEEEDEVAA.

It belongs to the tubulin family. As to quaternary structure, dimer of alpha and beta chains. A typical microtubule is a hollow water-filled tube with an outer diameter of 25 nm and an inner diameter of 15 nM. Alpha-beta heterodimers associate head-to-tail to form protofilaments running lengthwise along the microtubule wall with the beta-tubulin subunit facing the microtubule plus end conferring a structural polarity. Microtubules usually have 13 protofilaments but different protofilament numbers can be found in some organisms and specialized cells. Mg(2+) serves as cofactor. Expressed in roots, leaf sheaths, and suspension cultured cells.

It localises to the cytoplasm. Its subcellular location is the cytoskeleton. In terms of biological role, tubulin is the major constituent of microtubules, a cylinder consisting of laterally associated linear protofilaments composed of alpha- and beta-tubulin heterodimers. Microtubules grow by the addition of GTP-tubulin dimers to the microtubule end, where a stabilizing cap forms. Below the cap, tubulin dimers are in GDP-bound state, owing to GTPase activity of alpha-tubulin. The polypeptide is Tubulin beta-5 chain (TUBB5) (Oryza sativa subsp. japonica (Rice)).